The sequence spans 574 residues: Glutamyl-tRNA(Gln) amidotransferase subunit B, mitochondrial (574 aa).

This sequence belongs to the GatB/GatE family. GatB subfamily. In terms of assembly, subunit of the heterotrimeric GatCAB amidotransferase (AdT) complex, composed of A, B and C subunits.

The protein localises to the mitochondrion. The enzyme catalyses L-glutamyl-tRNA(Gln) + L-glutamine + ATP + H2O = L-glutaminyl-tRNA(Gln) + L-glutamate + ADP + phosphate + H(+). Allows the formation of correctly charged Gln-tRNA(Gln) through the transamidation of misacylated Glu-tRNA(Gln) in the mitochondria. The reaction takes place in the presence of glutamine and ATP through an activated gamma-phospho-Glu-tRNA(Gln). The protein is Glutamyl-tRNA(Gln) amidotransferase subunit B, mitochondrial of Phytophthora infestans (strain T30-4) (Potato late blight agent).